Consider the following 249-residue polypeptide: Small ribosomal subunit protein eS6 (249 aa).

Over residues Arg-216–Ala-229 the composition is skewed to basic and acidic residues. Residues Arg-216–Lys-249 form a disordered region. Phosphoserine occurs at positions 235, 236, 240, 244, and 247. Residues Ser-236 to Lys-249 show a composition bias toward low complexity.

This sequence belongs to the eukaryotic ribosomal protein eS6 family. In terms of assembly, component of the small ribosomal subunit. Part of the small subunit (SSU) processome, composed of more than 70 proteins and the RNA chaperone small nucleolar RNA (snoRNA) U3. Ribosomal protein S6 is the major substrate of protein kinases in eukaryote ribosomes. The phosphorylation is stimulated by growth factors, tumor promoting agents, and mitogens. It is dephosphorylated at growth arrest.

The protein localises to the cytoplasm. The protein resides in the nucleus. It is found in the nucleolus. In terms of biological role, component of the 40S small ribosomal subunit. Plays an important role in controlling cell growth and proliferation through the selective translation of particular classes of mRNA. Part of the small subunit (SSU) processome, first precursor of the small eukaryotic ribosomal subunit. During the assembly of the SSU processome in the nucleolus, many ribosome biogenesis factors, an RNA chaperone and ribosomal proteins associate with the nascent pre-rRNA and work in concert to generate RNA folding, modifications, rearrangements and cleavage as well as targeted degradation of pre-ribosomal RNA by the RNA exosome. The sequence is that of Small ribosomal subunit protein eS6 (RPS6) from Gallus gallus (Chicken).